The sequence spans 290 residues: 4-hydroxybenzoate octaprenyltransferase (290 aa).

Transmembrane regions (helical) follow at residues 21–41 (IGTLLLLWPTLWALFLSVKGM), 44–64 (LSILSIFVLGVIFMRAAGCVI), 84–104 (LATGAATPEEAKWLFVLLVFC), 106–126 (FILVLFLNTYAIVLSFIAVFL), 142–162 (LFLGMAFGWSIPMAYGASIEA), 212–232 (IISLLQIVTLFFLGLIGYLSQ), 235–255 (TSYFVVLFLATLLFVYQCKLI), and 267–287 (FLNNNYFGAMVFVAFLFGIFF).

This sequence belongs to the UbiA prenyltransferase family. Mg(2+) is required as a cofactor.

It is found in the cell inner membrane. It catalyses the reaction all-trans-octaprenyl diphosphate + 4-hydroxybenzoate = 4-hydroxy-3-(all-trans-octaprenyl)benzoate + diphosphate. The protein operates within cofactor biosynthesis; ubiquinone biosynthesis. In terms of biological role, catalyzes the prenylation of para-hydroxybenzoate (PHB) with an all-trans polyprenyl group. Mediates the second step in the final reaction sequence of ubiquinone-8 (UQ-8) biosynthesis, which is the condensation of the polyisoprenoid side chain with PHB, generating the first membrane-bound Q intermediate 3-octaprenyl-4-hydroxybenzoate. This Pasteurella multocida (strain Pm70) protein is 4-hydroxybenzoate octaprenyltransferase.